Here is a 484-residue protein sequence, read N- to C-terminus: MEKSWFNLMFSKGELEYRGELSKAMDSFAPSEKTTISKNRFIYDMDKNFYGWGERSSYSKNVDLLVSSKDIRNFISDDTFFVRDSNKNSYSIYFDIKKKFFEIDNDFSDLEFFFYSYCSSSYLNNSSKGDNDLHYDSYIKDTKYNCTNYIKSCIDSYFRSYICIDSNFLSDSNNSNESYIYNFICSESGKIRESKNYKIRTNRNRSNLISSKDFDITQNYNQLWIQCDNCYGLMYKKVKMNVCEQCGHYLKMMSSERIELSIDPGTWNPMDEDMVSADPIKFHSKEEPYKNRIDSAQKTTGLTDAVQTGTGQLNGIPVALGVMDFQFMGGSMGSVVGEKITRLIEYATNQRLPLILVCSSGGARMQEGSLSLMQMAKISSVLCDYQSSKKLFYISILTSPTTGGVTASFGMLGDIIIAEPYAYIAFAGKRVIEQTLKKAVPEGSQAAESLLRKGLLDAIVPRNLLKGVLSELFQLHAFFPLNKN.

Residues 223-484 (LWIQCDNCYG…LHAFFPLNKN (262 aa)) form the CoA carboxyltransferase N-terminal domain. Cys227, Cys230, Cys243, and Cys246 together coordinate Zn(2+). Residues 227 to 246 (CDNCYGLMYKKVKMNVCEQC) form a C4-type zinc finger.

The protein belongs to the AccD/PCCB family. As to quaternary structure, acetyl-CoA carboxylase is a heterohexamer composed of biotin carboxyl carrier protein, biotin carboxylase and 2 subunits each of ACCase subunit alpha and ACCase plastid-coded subunit beta (accD). Zn(2+) is required as a cofactor.

The protein resides in the plastid. The protein localises to the chloroplast stroma. The catalysed reaction is N(6)-carboxybiotinyl-L-lysyl-[protein] + acetyl-CoA = N(6)-biotinyl-L-lysyl-[protein] + malonyl-CoA. It participates in lipid metabolism; malonyl-CoA biosynthesis; malonyl-CoA from acetyl-CoA: step 1/1. In terms of biological role, component of the acetyl coenzyme A carboxylase (ACC) complex. Biotin carboxylase (BC) catalyzes the carboxylation of biotin on its carrier protein (BCCP) and then the CO(2) group is transferred by the transcarboxylase to acetyl-CoA to form malonyl-CoA. This chain is Acetyl-coenzyme A carboxylase carboxyl transferase subunit beta, chloroplastic, found in Olimarabidopsis pumila (Dwarf rocket).